We begin with the raw amino-acid sequence, 103 residues long: Large ribosomal subunit protein bL21 (103 aa).

Belongs to the bacterial ribosomal protein bL21 family. Part of the 50S ribosomal subunit. Contacts protein L20.

Functionally, this protein binds to 23S rRNA in the presence of protein L20. This chain is Large ribosomal subunit protein bL21, found in Thiobacillus denitrificans (strain ATCC 25259 / T1).